The following is a 170-amino-acid chain: Peptide deformylase (170 aa).

Cys-88 and His-130 together coordinate Fe cation. Glu-131 is an active-site residue. A Fe cation-binding site is contributed by His-134.

The protein belongs to the polypeptide deformylase family. Requires Fe(2+) as cofactor.

It catalyses the reaction N-terminal N-formyl-L-methionyl-[peptide] + H2O = N-terminal L-methionyl-[peptide] + formate. Removes the formyl group from the N-terminal Met of newly synthesized proteins. Requires at least a dipeptide for an efficient rate of reaction. N-terminal L-methionine is a prerequisite for activity but the enzyme has broad specificity at other positions. In Acetivibrio thermocellus (strain ATCC 27405 / DSM 1237 / JCM 9322 / NBRC 103400 / NCIMB 10682 / NRRL B-4536 / VPI 7372) (Clostridium thermocellum), this protein is Peptide deformylase.